We begin with the raw amino-acid sequence, 657 residues long: Probable potassium transport system protein Kup (657 aa).

Residues 1–25 are disordered; it reads MGSGPADEEHTVDTEPGVSPPRRTV. The next 12 membrane-spanning stretches (helical) occupy residues 35–55, 77–97, 127–147, 165–185, 196–216, 234–254, 275–295, 315–335, 365–385, 394–414, 422–442, and 447–467; these read VVVG…IYTI, VVSL…VLLV, TAVL…DSMI, PGLE…LFSV, LFGP…VSGI, FFFG…LAVT, WLVL…ALLL, WPMV…VITG, IYVP…VFAF, AFGM…FYIV, LWLV…FLAA, and LVHG…VMTT.

This sequence belongs to the HAK/KUP transporter (TC 2.A.72) family.

The protein localises to the cell membrane. The enzyme catalyses K(+)(in) + H(+)(in) = K(+)(out) + H(+)(out). Its function is as follows. Transport of potassium into the cell. Likely operates as a K(+):H(+) symporter. The sequence is that of Probable potassium transport system protein Kup from Rhodococcus jostii (strain RHA1).